The sequence spans 58 residues: Conotoxin Ar5.4 (58 aa).

Positions 1–20 (RIQSDLIRAALEDADMKNEK) are excised as a propeptide.

The protein belongs to the conotoxin T superfamily. Post-translationally, contains 2 disulfide bonds that can be either 'C1-C3, C2-C4' or 'C1-C4, C2-C3', since these disulfide connectivities have been observed for conotoxins with cysteine framework V (for examples, see AC P0DQQ7 and AC P81755). As to expression, expressed by the venom duct.

The protein resides in the secreted. The chain is Conotoxin Ar5.4 from Conus arenatus (Sand-dusted cone).